Here is a 556-residue protein sequence, read N- to C-terminus: MKTDIQIAQEATMLPIKDVAASIGIEEDDLELYGKYKAKISDELINRTKKNPDGKLILVTAINPTPAGEGKTTTSVGLGEAFGRLGKKALIALREPSLGPCFGIKGGAAGGGYAQVVPMEDLNLHFTGDFHAITSANNLLAALLDNHIQQGNELGIDPRQIVWKRCMDMNDRVLRNIVVGLGSKMDGMVREDHFVITVASEIMAILCLADDMADLKKRLGRIIVAYTFDGKPVTADDLQATGSMAALLKDALKPNLIQTLEHTPAIVHGGPFANIAHGCNSVRATKTALKLADYVITEAGFGADLGAEKFFDIKCRMAGLKPDAVVLVATIRALKYNGGVPKDELSSENLDALKAGIVNLEKHIENLHKFGVPVVVTLNSFVTDTKAETDFVEQFCKERGCEFALSEVWEKGGEGGIDLANKVLETIEHKESNFKVLYDDSLSLKEKIETVAKEIYGADGVTYSPAAERELKRITDLGMGDFPVCMAKTQYSLSDDAKKLGRPSGFKINVREVYASAGAGFVVAVNGSIMTMPGLSKKPAAYGIDVDDNGVITGLF.

Thr-65–Thr-72 is a binding site for ATP.

This sequence belongs to the formate--tetrahydrofolate ligase family.

The enzyme catalyses (6S)-5,6,7,8-tetrahydrofolate + formate + ATP = (6R)-10-formyltetrahydrofolate + ADP + phosphate. It functions in the pathway one-carbon metabolism; tetrahydrofolate interconversion. This chain is Formate--tetrahydrofolate ligase, found in Agathobacter rectalis (strain ATCC 33656 / DSM 3377 / JCM 17463 / KCTC 5835 / VPI 0990) (Eubacterium rectale).